The chain runs to 154 residues: Minor structural pilin EpdC (154 aa).

Positions 1-13 (MIKMLQLPFNKKG) are excised as a propeptide. A QXSXEXXXL motif is present at residues 14 to 24 (QVSFDFIIAML).

In terms of processing, the N-terminus is cleaved by the prepilin peptidase EppA, which recognizes the class III signal sequence.

Its subcellular location is the secreted. The protein localises to the cell surface. The protein resides in the fimbrium. In terms of biological role, minor component of the type IV-like pili. Essential for pili formation. This is Minor structural pilin EpdC from Methanococcus maripaludis (strain DSM 14266 / JCM 13030 / NBRC 101832 / S2 / LL).